Consider the following 263-residue polypeptide: MINVAVLGACGRMGSLIVENVINSKDMQLVAAFDISYFGRDAGEFARVGKLGVQISDVKNLETVLKESKADVLIDFTAAGATVVNAPIAARAGVNLIIGTTGLTPEQRAVIDEAIQEGQVSAVISPNYSVGVNVFFKIIREAAKYLADYDIEIIEAHHNQKKDAPSGTALRAADIISEAVGGREYVYGREGIAPRGKEIGIHGVRAGDITGDHIVLFAGNSERIEIKHIAHSRQIFAKGAVRAAEWVCRQKPGIYSMDDVLGL.

Residues 8–13 (GACGRM), D34, 99–101 (GTT), and 125–128 (SPNY) contribute to the NAD(+) site. H157 acts as the Proton donor/acceptor in catalysis. A (S)-2,3,4,5-tetrahydrodipicolinate-binding site is contributed by H158. The active-site Proton donor is K161. Residue 167–168 (GT) coordinates (S)-2,3,4,5-tetrahydrodipicolinate.

This sequence belongs to the DapB family.

The protein localises to the cytoplasm. It catalyses the reaction (S)-2,3,4,5-tetrahydrodipicolinate + NAD(+) + H2O = (2S,4S)-4-hydroxy-2,3,4,5-tetrahydrodipicolinate + NADH + H(+). The enzyme catalyses (S)-2,3,4,5-tetrahydrodipicolinate + NADP(+) + H2O = (2S,4S)-4-hydroxy-2,3,4,5-tetrahydrodipicolinate + NADPH + H(+). The protein operates within amino-acid biosynthesis; L-lysine biosynthesis via DAP pathway; (S)-tetrahydrodipicolinate from L-aspartate: step 4/4. Its function is as follows. Catalyzes the conversion of 4-hydroxy-tetrahydrodipicolinate (HTPA) to tetrahydrodipicolinate. The protein is 4-hydroxy-tetrahydrodipicolinate reductase of Methanosarcina barkeri (strain Fusaro / DSM 804).